The chain runs to 604 residues: Dopamine receptor 3 (604 aa).

The Extracellular portion of the chain corresponds to 1–23; that stretch reads MLTGQHHIPGIESPLMVVLWRVA. Residues 24 to 44 form a helical membrane-spanning segment; it reads AGVFLPLVPTMAVFGNVLVIL. Topologically, residues 45 to 58 are cytoplasmic; the sequence is SVYRERNLQTVTNM. Residues 59–79 traverse the membrane as a helical segment; the sequence is LIVSLAVSDLFVAIGVMSFGV. The Extracellular portion of the chain corresponds to 80–96; the sequence is YYEWNGFKWGLGSFFCH. Cys-95 and Cys-170 are joined by a disulfide. A helical transmembrane segment spans residues 97–117; it reads VYQALDVACSTASILNLLAIS. The Cytoplasmic portion of the chain corresponds to 118-141; that stretch reads LDRYIAIGHPISYAQYGARGGRAM. A helical transmembrane segment spans residues 142-162; it reads ISITIVWGVSCAVALPLLLGV. Topologically, residues 163–179 are extracellular; it reads NPMENDQCELANPWFNM. A helical transmembrane segment spans residues 180–200; that stretch reads ISSIFSFFIPCIAMIILYTII. Topologically, residues 201-520 are cytoplasmic; that stretch reads FRRLRQRERA…TKQMRREHKA (320 aa). The disordered stretch occupies residues 399 to 430; sequence SIQDEKKMNSRPPENPFAHQNGTNKQRLLPNP. Residues 521–541 traverse the membrane as a helical segment; that stretch reads TVTLAVVLAVFLFCWLPFFIL. The Extracellular segment spans residues 542–559; the sequence is HLSNSICLVIDSNSDCIG. Residues 560 to 580 traverse the membrane as a helical segment; it reads FLPLYLATWLGYLNSSLNPLI. Residues 581–604 are Cytoplasmic-facing; the sequence is YTVFDQRFRNAFRNILSCGFFKKR.

The protein belongs to the G-protein coupled receptor 1 family.

The protein localises to the cell membrane. Receptor for dopamine. The activity of this receptor is mediated by G proteins which activate adenylyl cyclase. In terms of antagonist responses, would be classed with the D2-like dopamine receptor group. Mediates the effect of dopamine on the inhibition of locomotion. Acts as an antagonist of dop-1. This Caenorhabditis briggsae protein is Dopamine receptor 3.